A 123-amino-acid chain; its full sequence is KxDL motif-containing protein LO9-177 (123 aa).

Positions 78-81 (KDDL) match the KxDL motif.

Belongs to the KXD1 family. As to quaternary structure, homodimer. Component of a nuclear cell elongation controlling complex made of ILI5/BUL1, LO9-177 and BC1. Binds directly to ILI5/BUL1, ILI4/BU1, BUL2 and BUL3. Binds to BC1 in the nucleus. Interacts with BCL1.

Its subcellular location is the nucleus. It is found in the cytoplasm. Its function is as follows. Contributes, together with ILI5/BUL1 and BC1, to the promotion of leaf inclination and grain size by modulating cell elongation. In Oryza sativa subsp. indica (Rice), this protein is KxDL motif-containing protein LO9-177.